The primary structure comprises 335 residues: Biotin synthase (335 aa).

Residues 43-269 (YFGKKVKLNM…INPTKEIRIA (227 aa)) enclose the Radical SAM core domain. 3 residues coordinate [4Fe-4S] cluster: cysteine 61, cysteine 65, and cysteine 68. 4 residues coordinate [2Fe-2S] cluster: cysteine 104, cysteine 137, cysteine 197, and arginine 267.

It belongs to the radical SAM superfamily. Biotin synthase family. As to quaternary structure, homodimer. [4Fe-4S] cluster is required as a cofactor. The cofactor is [2Fe-2S] cluster.

It catalyses the reaction (4R,5S)-dethiobiotin + (sulfur carrier)-SH + 2 reduced [2Fe-2S]-[ferredoxin] + 2 S-adenosyl-L-methionine = (sulfur carrier)-H + biotin + 2 5'-deoxyadenosine + 2 L-methionine + 2 oxidized [2Fe-2S]-[ferredoxin]. The protein operates within cofactor biosynthesis; biotin biosynthesis; biotin from 7,8-diaminononanoate: step 2/2. In terms of biological role, catalyzes the conversion of dethiobiotin (DTB) to biotin by the insertion of a sulfur atom into dethiobiotin via a radical-based mechanism. The sequence is that of Biotin synthase from Staphylococcus aureus (strain MSSA476).